The sequence spans 247 residues: 1-(5-phosphoribosyl)-5-[(5-phosphoribosylamino)methylideneamino] imidazole-4-carboxamide isomerase (247 aa).

The Proton acceptor role is filled by Asp8. Asp131 acts as the Proton donor in catalysis.

The protein belongs to the HisA/HisF family.

It is found in the cytoplasm. It catalyses the reaction 1-(5-phospho-beta-D-ribosyl)-5-[(5-phospho-beta-D-ribosylamino)methylideneamino]imidazole-4-carboxamide = 5-[(5-phospho-1-deoxy-D-ribulos-1-ylimino)methylamino]-1-(5-phospho-beta-D-ribosyl)imidazole-4-carboxamide. It participates in amino-acid biosynthesis; L-histidine biosynthesis; L-histidine from 5-phospho-alpha-D-ribose 1-diphosphate: step 4/9. The polypeptide is 1-(5-phosphoribosyl)-5-[(5-phosphoribosylamino)methylideneamino] imidazole-4-carboxamide isomerase (Cupriavidus metallidurans (strain ATCC 43123 / DSM 2839 / NBRC 102507 / CH34) (Ralstonia metallidurans)).